The sequence spans 227 residues: Cytochrome c oxidase subunit 2 (227 aa).

Residues 1–14 (MAYPFQLGLQDATS) are Mitochondrial intermembrane-facing. A helical membrane pass occupies residues 15 to 45 (PIMEELTNFHDHTLMIVFLISSLVLYIISLM). Residues 46 to 59 (LTTKLTHTNTMDAQ) lie on the Mitochondrial matrix side of the membrane. A helical transmembrane segment spans residues 60–87 (EVETIWTILPAVILILIALPSLRILYMM). Residues 88–227 (DEINNPALTV…HFENWSASMI (140 aa)) are Mitochondrial intermembrane-facing. Residues histidine 161, cysteine 196, glutamate 198, cysteine 200, histidine 204, and methionine 207 each contribute to the Cu cation site. Glutamate 198 contacts Mg(2+).

It belongs to the cytochrome c oxidase subunit 2 family. As to quaternary structure, component of the cytochrome c oxidase (complex IV, CIV), a multisubunit enzyme composed of 14 subunits. The complex is composed of a catalytic core of 3 subunits MT-CO1, MT-CO2 and MT-CO3, encoded in the mitochondrial DNA, and 11 supernumerary subunits COX4I, COX5A, COX5B, COX6A, COX6B, COX6C, COX7A, COX7B, COX7C, COX8 and NDUFA4, which are encoded in the nuclear genome. The complex exists as a monomer or a dimer and forms supercomplexes (SCs) in the inner mitochondrial membrane with NADH-ubiquinone oxidoreductase (complex I, CI) and ubiquinol-cytochrome c oxidoreductase (cytochrome b-c1 complex, complex III, CIII), resulting in different assemblies (supercomplex SCI(1)III(2)IV(1) and megacomplex MCI(2)III(2)IV(2)). Found in a complex with TMEM177, COA6, COX18, COX20, SCO1 and SCO2. Interacts with TMEM177 in a COX20-dependent manner. Interacts with COX20. Interacts with COX16. Requires Cu cation as cofactor.

The protein localises to the mitochondrion inner membrane. It carries out the reaction 4 Fe(II)-[cytochrome c] + O2 + 8 H(+)(in) = 4 Fe(III)-[cytochrome c] + 2 H2O + 4 H(+)(out). In terms of biological role, component of the cytochrome c oxidase, the last enzyme in the mitochondrial electron transport chain which drives oxidative phosphorylation. The respiratory chain contains 3 multisubunit complexes succinate dehydrogenase (complex II, CII), ubiquinol-cytochrome c oxidoreductase (cytochrome b-c1 complex, complex III, CIII) and cytochrome c oxidase (complex IV, CIV), that cooperate to transfer electrons derived from NADH and succinate to molecular oxygen, creating an electrochemical gradient over the inner membrane that drives transmembrane transport and the ATP synthase. Cytochrome c oxidase is the component of the respiratory chain that catalyzes the reduction of oxygen to water. Electrons originating from reduced cytochrome c in the intermembrane space (IMS) are transferred via the dinuclear copper A center (CU(A)) of subunit 2 and heme A of subunit 1 to the active site in subunit 1, a binuclear center (BNC) formed by heme A3 and copper B (CU(B)). The BNC reduces molecular oxygen to 2 water molecules using 4 electrons from cytochrome c in the IMS and 4 protons from the mitochondrial matrix. This chain is Cytochrome c oxidase subunit 2 (MT-CO2), found in Sundamys muelleri (Mueller's giant sunda rat).